A 350-amino-acid chain; its full sequence is Hepatocyte nuclear factor 3-gamma (350 aa).

The fork-head DNA-binding region spans 116 to 207 (AKPPYSYISL…GNMFENGCYL (92 aa)). Residues 217–276 (EKVKKGGSGAATTTRNGTGSAASTTTPAATVTSPPQPPPPAPEPEAQGGEDVGALDCGSP) are disordered. Positions 226 to 249 (AATTTRNGTGSAASTTTPAATVTS) are enriched in low complexity. A compositionally biased stretch (pro residues) spans 250 to 259 (PPQPPPPAPE).

Interacts with FOXA2. Expressed in erythroleukemia and hepatoma cell lines and in liver and pancreas. Not expressed in any other cell lines or tissues examined.

The protein localises to the nucleus. In terms of biological role, transcription factor that is thought to act as a 'pioneer' factor opening the compacted chromatin for other proteins through interactions with nucleosomal core histones and thereby replacing linker histones at target enhancer and/or promoter sites. Originally described as a transcription activator for a number of liver genes such as AFP, albumin, tyrosine aminotransferase, PEPCK, etc. Interacts with the cis-acting regulatory regions of these genes. Involved in glucose homeostasis; binds to and activates transcription from the G6PC1 promoter. Binds to the CYP3A4 promoter and activates its transcription in cooperation with CEBPA. Binds to the CYP3A7 promoter together with members of the CTF/NF-I family. Involved in regulation of neuronal-specific transcription. May be involved in regulation of spermatogenesis. This chain is Hepatocyte nuclear factor 3-gamma (FOXA3), found in Homo sapiens (Human).